A 101-amino-acid chain; its full sequence is Small ribosomal subunit protein uS14 (101 aa).

The protein belongs to the universal ribosomal protein uS14 family. Part of the 30S ribosomal subunit. Contacts proteins S3 and S10.

Its function is as follows. Binds 16S rRNA, required for the assembly of 30S particles and may also be responsible for determining the conformation of the 16S rRNA at the A site. This chain is Small ribosomal subunit protein uS14, found in Aromatoleum aromaticum (strain DSM 19018 / LMG 30748 / EbN1) (Azoarcus sp. (strain EbN1)).